Here is a 689-residue protein sequence, read N- to C-terminus: MSDASGPLQPDRPEADVPFRVEAPFDPAGDQPDAIAELVAGYEQGAQQQTLLGVTGSGKTNTVSWVVEELQQPTLVIAHNKTLAAQLYEEFRSLFPDNAVEYFVSYYNYYQPEAYVEQTDKYIEKDASINDEIDRLRHSATRSLLTRDDVIVVASVSAIYGLGDPRNYEEMSLRVERGQSIGRDQLLAKLVDLNYDRNDVDFTQGTFRVRGDTVEVYPMYGRYPVRVEFWGDEIDRMAKLDPLEGTVESEEPAVLFHPAEHYSVPDAEMEQAIERIRTDMHERVRHFERTGDMVAAQRIEERTTFDLEMMAEAGYCSGIENYSVYLSDREVGDAPYTLLDYFPDDFLTVIDESHRTVPQIKGQYEGDKSRKDSLVDNGFRLPTAYDNRPLTFAEFADKTDRTLYVSATPGDHERAQSANVVEQIVRPTHLVDPDISIADATGQVEDLMDRIDERVARDERVLVTTLTKRMAEDLTEYLEEAGVAVEYMHDETDTLERHELVRGLRLGEYDVLVGINLLREGLDIPEVSLVAILDADQQGFLRSETSLVQTMGRAARNVNGEVVLYADETTDAMQAAIDETQRRRRIQRAFNEDHGTTPTTIEKAVGDMNLPGAETDTADVAGDAPSDEQEAALLVEDLEARMEDAASNLEFELAADIRDRMRELREAFDLDGGDAPEDPGGVAPETEDW.

Residues 1–26 form a disordered region; that stretch reads MSDASGPLQPDRPEADVPFRVEAPFD. One can recognise a Helicase ATP-binding domain in the interval 40–422; it reads AGYEQGAQQQ…ERAQSANVVE (383 aa). 53–60 serves as a coordination point for ATP; it reads GVTGSGKT. The Beta-hairpin motif lies at 106 to 129; the sequence is YYNYYQPEAYVEQTDKYIEKDASI. In terms of domain architecture, Helicase C-terminal spans 443-605; it reads QVEDLMDRID…TTPTTIEKAV (163 aa). In terms of domain architecture, UVR spans 632–667; it reads ALLVEDLEARMEDAASNLEFELAADIRDRMRELREA. Residues 668–689 are disordered; it reads FDLDGGDAPEDPGGVAPETEDW.

Belongs to the UvrB family. In terms of assembly, forms a heterotetramer with UvrA during the search for lesions. Interacts with UvrC in an incision complex.

The protein localises to the cytoplasm. The UvrABC repair system catalyzes the recognition and processing of DNA lesions. A damage recognition complex composed of 2 UvrA and 2 UvrB subunits scans DNA for abnormalities. Upon binding of the UvrA(2)B(2) complex to a putative damaged site, the DNA wraps around one UvrB monomer. DNA wrap is dependent on ATP binding by UvrB and probably causes local melting of the DNA helix, facilitating insertion of UvrB beta-hairpin between the DNA strands. Then UvrB probes one DNA strand for the presence of a lesion. If a lesion is found the UvrA subunits dissociate and the UvrB-DNA preincision complex is formed. This complex is subsequently bound by UvrC and the second UvrB is released. If no lesion is found, the DNA wraps around the other UvrB subunit that will check the other stand for damage. This is UvrABC system protein B from Halobacterium salinarum (strain ATCC 700922 / JCM 11081 / NRC-1) (Halobacterium halobium).